We begin with the raw amino-acid sequence, 484 residues long: Probable glycine dehydrogenase (decarboxylating) subunit 2 (484 aa).

Lys-264 is modified (N6-(pyridoxal phosphate)lysine).

The protein belongs to the GcvP family. C-terminal subunit subfamily. In terms of assembly, the glycine cleavage system is composed of four proteins: P, T, L and H. In this organism, the P 'protein' is a heterodimer of two subunits. Requires pyridoxal 5'-phosphate as cofactor.

It carries out the reaction N(6)-[(R)-lipoyl]-L-lysyl-[glycine-cleavage complex H protein] + glycine + H(+) = N(6)-[(R)-S(8)-aminomethyldihydrolipoyl]-L-lysyl-[glycine-cleavage complex H protein] + CO2. The glycine cleavage system catalyzes the degradation of glycine. The P protein binds the alpha-amino group of glycine through its pyridoxal phosphate cofactor; CO(2) is released and the remaining methylamine moiety is then transferred to the lipoamide cofactor of the H protein. The protein is Probable glycine dehydrogenase (decarboxylating) subunit 2 of Legionella pneumophila (strain Corby).